Consider the following 173-residue polypeptide: Histone deacetylase complex subunit SAP30 homolog (173 aa).

The segment at 21 to 69 (CCLLDDGDRCRNQAGNASYSKRIQKTVTQRRLKLSIDTAARHIYICDFH) adopts an Atypical zinc-finger fold.

The protein belongs to the SAP30 family. In terms of assembly, component of the class 1 Sin3-histone deacetylase complex (HDAC).

The protein localises to the nucleus. In terms of biological role, required for the function of the class 1 Sin3-histone deacetylase complex (HDAC). The chain is Histone deacetylase complex subunit SAP30 homolog from Aedes aegypti (Yellowfever mosquito).